Consider the following 214-residue polypeptide: ATP phosphoribosyltransferase (214 aa).

It belongs to the ATP phosphoribosyltransferase family. Short subfamily. Heteromultimer composed of HisG and HisZ subunits.

The protein localises to the cytoplasm. The catalysed reaction is 1-(5-phospho-beta-D-ribosyl)-ATP + diphosphate = 5-phospho-alpha-D-ribose 1-diphosphate + ATP. It participates in amino-acid biosynthesis; L-histidine biosynthesis; L-histidine from 5-phospho-alpha-D-ribose 1-diphosphate: step 1/9. Its function is as follows. Catalyzes the condensation of ATP and 5-phosphoribose 1-diphosphate to form N'-(5'-phosphoribosyl)-ATP (PR-ATP). Has a crucial role in the pathway because the rate of histidine biosynthesis seems to be controlled primarily by regulation of HisG enzymatic activity. The chain is ATP phosphoribosyltransferase from Streptococcus gordonii (strain Challis / ATCC 35105 / BCRC 15272 / CH1 / DL1 / V288).